Here is a 372-residue protein sequence, read N- to C-terminus: Putative 26S proteasome regulatory subunit homolog MTBMA_c13930 (372 aa).

Residue 164–171 coordinates ATP; the sequence is GSPGTGKT.

Belongs to the AAA ATPase family.

Functionally, the 26S proteasome is involved in the ATP-dependent degradation of ubiquitinated proteins. The regulatory (or ATPase) complex confers ATP dependency and substrate specificity to the 26S complex. The sequence is that of Putative 26S proteasome regulatory subunit homolog MTBMA_c13930 from Methanothermobacter marburgensis (strain ATCC BAA-927 / DSM 2133 / JCM 14651 / NBRC 100331 / OCM 82 / Marburg) (Methanobacterium thermoautotrophicum).